The chain runs to 804 residues: Leucine--tRNA ligase (804 aa).

The 'HIGH' region signature appears at P39–H50. The 'KMSKS' region motif lies at K573–S577. K576 serves as a coordination point for ATP.

The protein belongs to the class-I aminoacyl-tRNA synthetase family.

Its subcellular location is the cytoplasm. The enzyme catalyses tRNA(Leu) + L-leucine + ATP = L-leucyl-tRNA(Leu) + AMP + diphosphate. The protein is Leucine--tRNA ligase of Lactobacillus delbrueckii subsp. bulgaricus (strain ATCC BAA-365 / Lb-18).